Reading from the N-terminus, the 467-residue chain is Ribulose bisphosphate carboxylase large chain (467 aa).

N6,N6,N6-trimethyllysine is present on K6. Positions 115 and 165 each coordinate substrate. K167 (proton acceptor) is an active-site residue. K169 provides a ligand contact to substrate. Residues K193, D195, and E196 each contribute to the Mg(2+) site. K193 carries the N6-carboxylysine modification. H286 acts as the Proton acceptor in catalysis. The substrate site is built by R287, H319, and S371.

The protein belongs to the RuBisCO large chain family. Type I subfamily. Heterohexadecamer of 8 large chains and 8 small chains; disulfide-linked. The disulfide link is formed within the large subunit homodimers. It depends on Mg(2+) as a cofactor. Post-translationally, the disulfide bond which can form in the large chain dimeric partners within the hexadecamer appears to be associated with oxidative stress and protein turnover.

It localises to the plastid. It is found in the chloroplast. It catalyses the reaction 2 (2R)-3-phosphoglycerate + 2 H(+) = D-ribulose 1,5-bisphosphate + CO2 + H2O. The catalysed reaction is D-ribulose 1,5-bisphosphate + O2 = 2-phosphoglycolate + (2R)-3-phosphoglycerate + 2 H(+). RuBisCO catalyzes two reactions: the carboxylation of D-ribulose 1,5-bisphosphate, the primary event in carbon dioxide fixation, as well as the oxidative fragmentation of the pentose substrate in the photorespiration process. Both reactions occur simultaneously and in competition at the same active site. The protein is Ribulose bisphosphate carboxylase large chain of Cedrus atlantica (Atlas cedar).